A 459-amino-acid chain; its full sequence is Putrescine aminotransferase (459 aa).

Residues 150–151 and glutamine 274 contribute to the pyridoxal 5'-phosphate site; that span reads GT. Lysine 300 is modified (N6-(pyridoxal phosphate)lysine). A pyridoxal 5'-phosphate-binding site is contributed by threonine 332.

This sequence belongs to the class-III pyridoxal-phosphate-dependent aminotransferase family. Putrescine aminotransferase subfamily. Requires pyridoxal 5'-phosphate as cofactor.

It carries out the reaction an alkane-alpha,omega-diamine + 2-oxoglutarate = an omega-aminoaldehyde + L-glutamate. The catalysed reaction is putrescine + 2-oxoglutarate = 1-pyrroline + L-glutamate + H2O. The enzyme catalyses cadaverine + 2-oxoglutarate = 5-aminopentanal + L-glutamate. It participates in amine and polyamine degradation; putrescine degradation; 4-aminobutanal from putrescine (transaminase route): step 1/1. Catalyzes the aminotransferase reaction from putrescine to 2-oxoglutarate, leading to glutamate and 4-aminobutanal, which spontaneously cyclizes to form 1-pyrroline. This is the first step in one of two pathways for putrescine degradation, where putrescine is converted into 4-aminobutanoate (gamma-aminobutyrate or GABA) via 4-aminobutanal. Also functions as a cadaverine transaminase in a a L-lysine degradation pathway to succinate that proceeds via cadaverine, glutarate and L-2-hydroxyglutarate. The protein is Putrescine aminotransferase of Shigella flexneri serotype 5b (strain 8401).